A 121-amino-acid chain; its full sequence is Putative membrane protein insertion efficiency factor (121 aa).

Residues 97-121 form a disordered region; sequence VPARRDRHAGGRRCCPANVDEQRST.

Belongs to the UPF0161 family.

Its subcellular location is the cell membrane. Could be involved in insertion of integral membrane proteins into the membrane. The chain is Putative membrane protein insertion efficiency factor from Rhodococcus jostii (strain RHA1).